The following is a 122-amino-acid chain: Large ribosomal subunit protein uL14c (122 aa).

It belongs to the universal ribosomal protein uL14 family. Part of the 50S ribosomal subunit.

The protein localises to the plastid. It is found in the chloroplast. Binds to 23S rRNA. This Pinus koraiensis (Korean pine) protein is Large ribosomal subunit protein uL14c.